A 108-amino-acid polypeptide reads, in one-letter code: uncharacterized protein (108 aa).

This sequence belongs to the UPF0440 family.

This is an uncharacterized protein from Thermococcus kodakarensis (strain ATCC BAA-918 / JCM 12380 / KOD1) (Pyrococcus kodakaraensis (strain KOD1)).